The primary structure comprises 105 residues: Molt-inhibiting hormone (105 aa).

Residues 1-28 (MYRLAMRTWLAIVIVVVGTSLLFDTASA) form the signal peptide. 3 disulfides stabilise this stretch: cysteine 35/cysteine 72, cysteine 52/cysteine 68, and cysteine 55/cysteine 81.

It belongs to the arthropod CHH/MIH/GIH/VIH hormone family. In terms of tissue distribution, produced by the medulla terminalis X-organ in the eyestalks and transported to the sinus gland where it is stored and released.

The protein localises to the secreted. Functionally, inhibits Y-organs where molting hormone (ecdysteroid) is secreted. A molting cycle is initiated when MIH secretion diminishes or stops. Has little or no hyperglycemic activity. This chain is Molt-inhibiting hormone, found in Penaeus japonicus (Kuruma prawn).